A 490-amino-acid polypeptide reads, in one-letter code: NAD/NADP-dependent betaine aldehyde dehydrogenase (490 aa).

K(+)-binding residues include T26, I27, and D93. 150-153 (GAWN) provides a ligand contact to NADPH. K162 serves as the catalytic Charge relay system. 176–179 (KPSE) provides a ligand contact to NADPH. V180 lines the K(+) pocket. NADPH-binding positions include G209 and 230 to 233 (GTST). L246 contributes to the K(+) binding site. E252 acts as the Proton acceptor in catalysis. The NADPH site is built by C286 and E387. The active-site Nucleophile is C286. C286 is subject to Cysteine sulfenic acid (-SOH). K(+) contacts are provided by K457 and G460. E464 functions as the Charge relay system in the catalytic mechanism.

Belongs to the aldehyde dehydrogenase family. In terms of assembly, dimer of dimers. Requires K(+) as cofactor.

It carries out the reaction betaine aldehyde + NAD(+) + H2O = glycine betaine + NADH + 2 H(+). It catalyses the reaction betaine aldehyde + NADP(+) + H2O = glycine betaine + NADPH + 2 H(+). It functions in the pathway amine and polyamine biosynthesis; betaine biosynthesis via choline pathway; betaine from betaine aldehyde: step 1/1. Its function is as follows. Involved in the biosynthesis of the osmoprotectant glycine betaine. Catalyzes the irreversible oxidation of betaine aldehyde to the corresponding acid. In P.aeruginosa this reaction is a compulsory step in the assimilation of carbon and nitrogen when bacteria are growing in choline or choline precursors. Can use NADP(+) with similar efficiency to NAD(+), a property that can be used by the bacterium to produce the NADPH needed to combat the oxidative stress imposed by the host defenses. This chain is NAD/NADP-dependent betaine aldehyde dehydrogenase, found in Pseudomonas aeruginosa (strain ATCC 15692 / DSM 22644 / CIP 104116 / JCM 14847 / LMG 12228 / 1C / PRS 101 / PAO1).